Consider the following 325-residue polypeptide: ATP phosphoribosyltransferase (325 aa).

It belongs to the ATP phosphoribosyltransferase family. Long subfamily. Mg(2+) serves as cofactor.

It localises to the cytoplasm. The enzyme catalyses 1-(5-phospho-beta-D-ribosyl)-ATP + diphosphate = 5-phospho-alpha-D-ribose 1-diphosphate + ATP. The protein operates within amino-acid biosynthesis; L-histidine biosynthesis; L-histidine from 5-phospho-alpha-D-ribose 1-diphosphate: step 1/9. Its activity is regulated as follows. Feedback inhibited by histidine. Catalyzes the condensation of ATP and 5-phosphoribose 1-diphosphate to form N'-(5'-phosphoribosyl)-ATP (PR-ATP). Has a crucial role in the pathway because the rate of histidine biosynthesis seems to be controlled primarily by regulation of HisG enzymatic activity. The sequence is that of ATP phosphoribosyltransferase from Afipia carboxidovorans (strain ATCC 49405 / DSM 1227 / KCTC 32145 / OM5) (Oligotropha carboxidovorans).